A 1955-amino-acid chain; its full sequence is 227 kDa spindle- and centromere-associated protein (1955 aa).

Coiled coils occupy residues 82–129 (KKRI…NDDV), 152–317 (EWAS…ELES), 385–1747 (VRNI…LIAL), and 1770–1813 (ERIV…ERFI). Disordered regions lie at residues 1865–1896 (PTEQHASRGKEAYRTSSTIKSSEGTTRESYTY) and 1912–1955 (MTSS…TFSE). Residues 1878-1896 (RTSSTIKSSEGTTRESYTY) are compositionally biased toward polar residues. The segment covering 1938–1948 (RKSRPATRKQQ) has biased composition (basic residues).

It is found in the cytoplasm. The protein resides in the cytoskeleton. It localises to the microtubule organizing center. Its subcellular location is the centrosome. The protein localises to the chromosome. It is found in the centromere. The protein resides in the kinetochore. It localises to the spindle. Functionally, may play a role in the organization of the spindle apparatus and its interaction with the centromeres. The sequence is that of 227 kDa spindle- and centromere-associated protein (PUMA1) from Parascaris univalens (Nematode worm).